The following is a 100-amino-acid chain: Urease subunit gamma (100 aa).

The protein belongs to the urease gamma subunit family. As to quaternary structure, heterotrimer of UreA (gamma), UreB (beta) and UreC (alpha) subunits. Three heterotrimers associate to form the active enzyme.

It localises to the cytoplasm. It catalyses the reaction urea + 2 H2O + H(+) = hydrogencarbonate + 2 NH4(+). It functions in the pathway nitrogen metabolism; urea degradation; CO(2) and NH(3) from urea (urease route): step 1/1. This chain is Urease subunit gamma, found in Paraburkholderia phytofirmans (strain DSM 17436 / LMG 22146 / PsJN) (Burkholderia phytofirmans).